The chain runs to 266 residues: Glucosamine-6-phosphate deaminase (266 aa).

D72 functions as the Proton acceptor; for enolization step in the catalytic mechanism. Catalysis depends on D141, which acts as the For ring-opening step. H143 functions as the Proton acceptor; for ring-opening step in the catalytic mechanism. E148 acts as the For ring-opening step in catalysis.

This sequence belongs to the glucosamine/galactosamine-6-phosphate isomerase family. NagB subfamily. As to quaternary structure, homohexamer.

The enzyme catalyses alpha-D-glucosamine 6-phosphate + H2O = beta-D-fructose 6-phosphate + NH4(+). The protein operates within amino-sugar metabolism; N-acetylneuraminate degradation; D-fructose 6-phosphate from N-acetylneuraminate: step 5/5. With respect to regulation, allosterically activated by N-acetylglucosamine 6-phosphate (GlcNAc6P). In terms of biological role, catalyzes the reversible isomerization-deamination of glucosamine 6-phosphate (GlcN6P) to form fructose 6-phosphate (Fru6P) and ammonium ion. The sequence is that of Glucosamine-6-phosphate deaminase from Yersinia enterocolitica serotype O:8 / biotype 1B (strain NCTC 13174 / 8081).